A 213-amino-acid polypeptide reads, in one-letter code: Citrate synthase, mitochondrial (213 aa).

The active site involves His-74. Lys-94 and Lys-100 each carry N6-acetyllysine; alternate. 2 positions are modified to N6-succinyllysine; alternate: Lys-94 and Lys-100. His-120 is an active-site residue. Residue Arg-129 participates in oxaloacetate binding. Lys-148 bears the N6-acetyllysine; alternate mark. Residue Lys-148 is modified to N6-succinyllysine; alternate. Lys-155 bears the N6-acetyllysine mark. Lys-166 carries the N6-acetyllysine; alternate modification. Lys-166 is subject to N6-succinyllysine; alternate. Residue Lys-168 is modified to N6,N6,N6-trimethyllysine. Asp-175 is an active-site residue. Arg-201 lines the oxaloacetate pocket.

It belongs to the citrate synthase family. Homodimer. In terms of processing, in response to mitochondrial stress, the precursor protein is ubiquitinated by the SIFI complex in the cytoplasm before mitochondrial import, leading to its degradation. Within the SIFI complex, UBR4 initiates ubiquitin chain that are further elongated or branched by KCMF1.

Its subcellular location is the mitochondrion matrix. It catalyses the reaction oxaloacetate + acetyl-CoA + H2O = citrate + CoA + H(+). It participates in carbohydrate metabolism; tricarboxylic acid cycle; isocitrate from oxaloacetate: step 1/2. Its function is as follows. Key enzyme of the Krebs tricarboxylic acid cycle which catalyzes the synthesis of citrate from acetyl coenzyme A and oxaloacetate. This is Citrate synthase, mitochondrial from Mesocricetus auratus (Golden hamster).